Here is a 545-residue protein sequence, read N- to C-terminus: CTP synthase (545 aa).

An amidoligase domain region spans residues methionine 1 to leucine 266. A CTP-binding site is contributed by serine 14. Serine 14 is a binding site for UTP. ATP-binding positions include serine 15–isoleucine 20 and aspartate 72. Mg(2+) is bound by residues aspartate 72 and glutamate 140. Residues aspartate 147 to glutamate 149, lysine 187 to glutamine 192, and lysine 223 each bind CTP. UTP contacts are provided by residues lysine 187 to glutamine 192 and lysine 223. Lysine 239–valine 241 contacts ATP. The 252-residue stretch at threonine 291–arginine 542 folds into the Glutamine amidotransferase type-1 domain. Glycine 352 serves as a coordination point for L-glutamine. Catalysis depends on cysteine 379, which acts as the Nucleophile; for glutamine hydrolysis. Residues leucine 380 to glutamine 383, glutamate 403, and arginine 470 contribute to the L-glutamine site. Catalysis depends on residues histidine 515 and glutamate 517.

Belongs to the CTP synthase family. In terms of assembly, homotetramer.

It carries out the reaction UTP + L-glutamine + ATP + H2O = CTP + L-glutamate + ADP + phosphate + 2 H(+). It catalyses the reaction L-glutamine + H2O = L-glutamate + NH4(+). The enzyme catalyses UTP + NH4(+) + ATP = CTP + ADP + phosphate + 2 H(+). It participates in pyrimidine metabolism; CTP biosynthesis via de novo pathway; CTP from UDP: step 2/2. With respect to regulation, allosterically activated by GTP, when glutamine is the substrate; GTP has no effect on the reaction when ammonia is the substrate. The allosteric effector GTP functions by stabilizing the protein conformation that binds the tetrahedral intermediate(s) formed during glutamine hydrolysis. Inhibited by the product CTP, via allosteric rather than competitive inhibition. Catalyzes the ATP-dependent amination of UTP to CTP with either L-glutamine or ammonia as the source of nitrogen. Regulates intracellular CTP levels through interactions with the four ribonucleotide triphosphates. The chain is CTP synthase from Shigella boydii serotype 18 (strain CDC 3083-94 / BS512).